We begin with the raw amino-acid sequence, 349 residues long: Anthranilate phosphoribosyltransferase (349 aa).

5-phospho-alpha-D-ribose 1-diphosphate-binding positions include Gly82, 85 to 86 (GD), 92 to 95 (NVSS), 110 to 118 (KHGNRAVSG), and Ser122. Gly82 provides a ligand contact to anthranilate. Ser94 provides a ligand contact to Mg(2+). Asn113 provides a ligand contact to anthranilate. Arg168 is an anthranilate binding site. Residues Asp227 and Glu228 each coordinate Mg(2+).

This sequence belongs to the anthranilate phosphoribosyltransferase family. In terms of assembly, homodimer. The cofactor is Mg(2+).

The enzyme catalyses N-(5-phospho-beta-D-ribosyl)anthranilate + diphosphate = 5-phospho-alpha-D-ribose 1-diphosphate + anthranilate. It functions in the pathway amino-acid biosynthesis; L-tryptophan biosynthesis; L-tryptophan from chorismate: step 2/5. Its function is as follows. Catalyzes the transfer of the phosphoribosyl group of 5-phosphorylribose-1-pyrophosphate (PRPP) to anthranilate to yield N-(5'-phosphoribosyl)-anthranilate (PRA). The sequence is that of Anthranilate phosphoribosyltransferase from Pseudomonas aeruginosa (strain LESB58).